The sequence spans 250 residues: Ribosomal RNA small subunit methyltransferase J (250 aa).

S-adenosyl-L-methionine-binding positions include 101–102 (RD), 117–118 (ER), 153–154 (SS), and D171.

It belongs to the methyltransferase superfamily. RsmJ family.

Its subcellular location is the cytoplasm. It catalyses the reaction guanosine(1516) in 16S rRNA + S-adenosyl-L-methionine = N(2)-methylguanosine(1516) in 16S rRNA + S-adenosyl-L-homocysteine + H(+). In terms of biological role, specifically methylates the guanosine in position 1516 of 16S rRNA. This is Ribosomal RNA small subunit methyltransferase J from Escherichia coli (strain SMS-3-5 / SECEC).